Consider the following 314-residue polypeptide: MIKVVFMGTPDFSVPVLRRLIEDGYEVVGVVTQPDRPVGRKKVLTPTPVKVEAEKHGIPVLQPLKIREKDEYEKVLALEPDLIVTAAFGQIVPNEILEAPKYGCINVHASLLPELRGGAPIHYAIMEGKEKTGITIMYMVEKLDAGDILTQVEVEIEERETTGSLFDKLSEAGAHLLSKTVPLLIQGKLEPIKQNEEEVTFAYNIKREQEKIDWTKTGEEVYNHIRGLNPWPVAYTTLAGQVVKVWWGEKVPVTEPAEAGTIVAIEEDGFVVATSNETGVKITELQPSGKKRMSCSQFLRGTKPEIGTKLGENA.

(6S)-5,6,7,8-tetrahydrofolate is bound at residue 110–113 (SLLP).

It belongs to the Fmt family.

It catalyses the reaction L-methionyl-tRNA(fMet) + (6R)-10-formyltetrahydrofolate = N-formyl-L-methionyl-tRNA(fMet) + (6S)-5,6,7,8-tetrahydrofolate + H(+). In terms of biological role, attaches a formyl group to the free amino group of methionyl-tRNA(fMet). The formyl group appears to play a dual role in the initiator identity of N-formylmethionyl-tRNA by promoting its recognition by IF2 and preventing the misappropriation of this tRNA by the elongation apparatus. The protein is Methionyl-tRNA formyltransferase of Bacillus cereus (strain G9842).